The sequence spans 146 residues: Hemoglobin subunit beta (146 aa).

An N-acetylvaline modification is found at Val-1. The 145-residue stretch at 2-146 (HLTAEEKAAV…VANALAHKYH (145 aa)) folds into the Globin domain. Thr-12 is modified (phosphothreonine). The residue at position 44 (Ser-44) is a Phosphoserine. Lys-59 is subject to N6-acetyllysine. His-63 serves as a coordination point for heme b. Lys-82 is modified (N6-acetyllysine). His-92 is a heme b binding site. At Cys-93 the chain carries S-nitrosocysteine. Lys-144 bears the N6-acetyllysine mark.

This sequence belongs to the globin family. In terms of assembly, heterotetramer of two alpha chains and two beta chains. As to expression, red blood cells.

In terms of biological role, involved in oxygen transport from the lung to the various peripheral tissues. The sequence is that of Hemoglobin subunit beta (HBB) from Mellivora capensis (Ratel).